The sequence spans 123 residues: Small ribosomal subunit protein uS13c (123 aa).

The disordered stretch occupies residues 99-123 (GQRTRSNARTRRGAKKTVAGKKLAK). Basic residues predominate over residues 100 to 123 (QRTRSNARTRRGAKKTVAGKKLAK).

The protein belongs to the universal ribosomal protein uS13 family. In terms of assembly, part of the 30S ribosomal subunit.

The protein resides in the plastid. It is found in the chloroplast. Functionally, located at the top of the head of the 30S subunit, it contacts several helices of the 16S rRNA. This Cyanidioschyzon merolae (strain NIES-3377 / 10D) (Unicellular red alga) protein is Small ribosomal subunit protein uS13c.